A 269-amino-acid chain; its full sequence is Chromophore lyase CRL, chloroplastic (269 aa).

Residues 19-36 (ARGLVVKTLVLIGGALLI) traverse the membrane as a helical segment.

It belongs to the CpcT/CpeT biliprotein lyase family. In terms of tissue distribution, mostly expressed in shoot apices, to a lower extent, in leaves, inflorescence stems, buds and cotyledons, and, at low levels, in roots and siliques.

The protein resides in the plastid. It localises to the chloroplast outer membrane. Covalently attaches a chromophore to Cys residue(s) of phycobiliproteins. Required for plastid division, and involved in cell differentiation and regulation of the cell division plane. Maintenance of plastid homeostasis controls plant preconditioning to stress and stress acclimation. In terms of biological role, confers sensitivity to cabbage leaf curl virus (CaLCuV), probably by supporting viral movement. The chain is Chromophore lyase CRL, chloroplastic (CRL) from Arabidopsis thaliana (Mouse-ear cress).